The chain runs to 144 residues: Nucleoside diphosphate kinase (144 aa).

K11, F59, R87, T93, R104, and N114 together coordinate ATP. The active-site Pros-phosphohistidine intermediate is the H117.

Belongs to the NDK family. In terms of assembly, homotetramer. Requires Mg(2+) as cofactor.

It is found in the cytoplasm. It carries out the reaction a 2'-deoxyribonucleoside 5'-diphosphate + ATP = a 2'-deoxyribonucleoside 5'-triphosphate + ADP. The catalysed reaction is a ribonucleoside 5'-diphosphate + ATP = a ribonucleoside 5'-triphosphate + ADP. In terms of biological role, major role in the synthesis of nucleoside triphosphates other than ATP. The ATP gamma phosphate is transferred to the NDP beta phosphate via a ping-pong mechanism, using a phosphorylated active-site intermediate. The sequence is that of Nucleoside diphosphate kinase from Psychromonas ingrahamii (strain DSM 17664 / CCUG 51855 / 37).